A 461-amino-acid polypeptide reads, in one-letter code: Protein ultraspiracle homolog (461 aa).

The segment at 1 to 112 is modulating; that stretch reads MSSVAKKDKR…NHPLSGSKHL (112 aa). Positions 26–51 are disordered; it reads PAPHQQQSMPSSQPSNFLQPLATPST. Over residues 27–40 the composition is skewed to low complexity; that stretch reads APHQQQSMPSSQPS. The segment covering 41–51 has biased composition (polar residues); sequence NFLQPLATPST. 2 NR C4-type zinc fingers span residues 113-133 and 149-173; these read CSIC…CEGC and CRED…YQKC. The segment at residues 113–185 is a DNA-binding region (nuclear receptor); that stretch reads CSICGDRASG…CGMKREAVQE (73 aa). The hinge stretch occupies residues 185 to 192; that stretch reads EERQRAAR. One can recognise an NR LBD domain in the interval 203-452; the sequence is VQELSIERLL…SYIHDALRNH (250 aa).

The protein belongs to the nuclear hormone receptor family. NR2 subfamily. Heterodimer of USP and ECR. Only the heterodimer is capable of high-affinity binding to ecdysone.

Its subcellular location is the nucleus. Receptor for ecdysone. May be an important modulator of insect metamorphosis. This chain is Protein ultraspiracle homolog (USP), found in Manduca sexta (Tobacco hawkmoth).